The sequence spans 924 residues: Alpha-actinin, sarcomeric (924 aa).

The tract at residues 1–250 (MMMENGLSME…IMTYVSCYYH (250 aa)) is actin-binding. 2 Calponin-homology (CH) domains span residues 34–138 (KQQK…LRFA) and 147–253 (MTAK…HAFQ). Spectrin repeat units follow at residues 251-395 (AFQG…TVSD), 396-510 (ISNS…RCQR), 511-631 (ICDQ…TAND), and 632-744 (MTRK…TMET). EF-hand domains lie at 778-813 (EQLN…LGYS) and 819-854 (QGDL…ESTD). 5 residues coordinate Ca(2+): Asp-791, Asn-793, Thr-795, Arg-797, and Glu-802.

The protein belongs to the alpha-actinin family. In terms of assembly, homodimer; antiparallel. Interacts with Smn; the interaction occurs in adult thoracic tissues. As to expression, larval muscle isoform is expressed in the larval body wall, adult muscles of the head and abdomen and supercontractile muscles of the larva and adult. Adult muscle isoform accumulates within adult fibrillar and tubular muscles.

The protein resides in the cytoplasm. Its subcellular location is the myofibril. The protein localises to the sarcomere. It localises to the z line. F-actin cross-linking protein which is thought to anchor actin to a variety of intracellular structures. This is a bundling protein. The sequence is that of Alpha-actinin, sarcomeric (Actn) from Drosophila melanogaster (Fruit fly).